Consider the following 267-residue polypeptide: MTRKYTKKSSGSTASTTNSTAEIVDLTTSTSSVGKKRKSPDEKAQPITKKALNSLTPVQSMFEKYKGKNIIKAIHYTYLYTYIFNVHLDDDETIGPEGIARFCSDIGLAPDSFEILVLAWTMNASKMGYFSKNEFSSGFEKLQCSDLSTLKKQLNSTSQKLKHDSTKFTDLYKYAFGFASEVESKKSVDLGTAAEMLKLLLPEGPHTTNFAAFLCTQPNKSINKDQWLCFLEFSRTVKADLSNYDDSEAWPLLLDQFSEWVQQEKRI.

A disordered region spans residues 1–48; the sequence is MTRKYTKKSSGSTASTTNSTAEIVDLTTSTSSVGKKRKSPDEKAQPIT. Residues 8-21 show a composition bias toward low complexity; it reads KSSGSTASTTNSTA. In terms of domain architecture, DCUN1 spans 75-262; that stretch reads HYTYLYTYIF…LLDQFSEWVQ (188 aa).

This is DCN1-like protein 2 from Dictyostelium discoideum (Social amoeba).